The chain runs to 856 residues: MKGSKNQLLIAIVLASAYLIHCKQFVTVFYGIPAWRNASIPLFCATKNRDTWGTIQCLPDNDDYQEITLNVTEAFDAWNNTVTEQAVEDVWNLFETSIKPCVKLTPLCVAMNCTRNMTTWTGRTDTQNITIINDTSHARADNCTGLKEEEMIDCQFSMTGLERDKRKQYTEAWYSKDVVCDNNTSSQSKCYMNHCNTSVITESCDKHYWDAMRFRYCAPPGFALLRCNDTNYSGFAPNCSKVVAATCTRMMETQTSTWFGFNGTRAENRTYIYWHGKDNRTIISLNNFYNLTMHCKRPGNKTVLPITFMSGFKFHSQPVINKKPRQAWCWFEGQWKEAMQEVKETLAKHPRYKGNRSRTENIKFKAPGRGSDPEVTYMWTNCRGESLYCNMTWFLNWVENRTGQKQRNYAPCRIRQIINTWHRVGKNLYLPPREGELTCNSTVTSIIANIDAGDQTNITFSAEAAELYRLELGDYKLVEITPIGFAPTSVKRYSSAHQRHTRGVFVLGFLGFLATAGSAMGAASLTLSAQSRTLLAGIVQQQQQLLDVVKRQQEMLRLTVWGTKNLQARVTAIEKYLKDQAQLNSWGCAFRQVCHTSVPWVNDTLTPDWNNMTWQEWEQKVRYLEANISQSLEQAQIQQEKNMYELQKLNSWDVFTNWLDFTSWVRYIQYGVYVVVGIVALRIVIYIVQMLSRLRKGYRPVFSSPPGYIQQIHIHKDQEQPAREETEEDVGSNGGDRSWPWPIAYIHFLIRLLIRLLTGLYNICRDLLSRISPILQPIFQSLQRALTAIRDWLRLKAAYLQYGCEWIQEAFQALARTTRETLAGAGRDLWRALQRIGRGILAVPRRIRQGAELALL.

The first 22 residues, 1–22 (MKGSKNQLLIAIVLASAYLIHC), serve as a signal peptide directing secretion. Topologically, residues 23–670 (KQFVTVFYGI…FTSWVRYIQY (648 aa)) are extracellular. Residue Asn-37 is glycosylated (N-linked (GlcNAc...) asparagine; by host). An intrachain disulfide couples Cys-44 to Cys-57. N-linked (GlcNAc...) asparagine; by host glycans are attached at residues Asn-70, Asn-79, Asn-112, Asn-116, Asn-128, Asn-133, Asn-142, Asn-182, Asn-183, Asn-196, Asn-228, Asn-231, Asn-238, Asn-262, Asn-268, Asn-279, Asn-290, Asn-300, Asn-355, Asn-390, Asn-400, Asn-440, and Asn-457. Disulfide bonds link Cys-101–Cys-204, Cys-108–Cys-195, Cys-113–Cys-154, Cys-217–Cys-247, and Cys-227–Cys-239. Positions 113–153 (CTRNMTTWTGRTDTQNITIINDTSHARADNCTGLKEEEMID) are V1. A V2 region spans residues 154 to 195 (CQFSMTGLERDKRKQYTEAWYSKDVVCDNNTSSQSKCYMNHC). The interval 295 to 328 (CKRPGNKTVLPITFMSGFKFHSQPVINKKPRQAW) is V3. Cys-295 and Cys-329 are joined by a disulfide. Intrachain disulfides connect Cys-382-Cys-439 and Cys-389-Cys-412. Residues 389 to 412 (CNMTWFLNWVENRTGQKQRNYAPC) are V4. Residues 455–460 (QTNITF) form a V5 region. Residues 503–523 (GVFVLGFLGFLATAGSAMGAA) are fusion peptide. The immunosuppression stretch occupies residues 566 to 582 (LQARVTAIEKYLKDQAQ). Asn-602, Asn-611, and Asn-627 each carry an N-linked (GlcNAc...) asparagine; by host glycan. Residues 615–636 (QEWEQKVRYLEANISQSLEQAQ) are a coiled coil. Residues 648-669 (KLNSWDVFTNWLDFTSWVRYIQ) are MPER; binding to GalCer. The helical transmembrane segment at 671–691 (GVYVVVGIVALRIVIYIVQML) threads the bilayer. Residues 692–856 (SRLRKGYRPV…IRQGAELALL (165 aa)) are Cytoplasmic-facing. Positions 698–701 (YRPV) match the YXXV motif; contains endocytosis signal motif. Cys-764 is lipidated: S-palmitoyl cysteine; by host. The Di-leucine internalization motif signature appears at 855 to 856 (LL).

In terms of assembly, the mature envelope protein (Env) consists of a homotrimer of non-covalently associated gp120-gp41 heterodimers. The resulting complex protrudes from the virus surface as a spike. There seems to be as few as 10 spikes on the average virion. Interacts with human CD4, CCR5 and CXCR4, to form a P4HB/PDI-CD4-CXCR4-gp120 complex. Gp120 also interacts with the C-type lectins CD209/DC-SIGN and CLEC4M/DC-SIGNR (collectively referred to as DC-SIGN(R)). Gp120 and gp41 interact with GalCer. As to quaternary structure, the mature envelope protein (Env) consists of a homotrimer of non-covalently associated gp120-gp41 heterodimers. The resulting complex protrudes from the virus surface as a spike. There seems to be as few as 10 spikes on the average virion. Specific enzymatic cleavages in vivo yield mature proteins. Envelope glycoproteins are synthesized as an inactive precursor that is heavily N-glycosylated and processed likely by host cell furin in the Golgi to yield the mature SU and TM proteins. The cleavage site between SU and TM requires the minimal sequence [KR]-X-[KR]-R. In terms of processing, palmitoylation of the transmembrane protein and of Env polyprotein (prior to its proteolytic cleavage) is essential for their association with host cell membrane lipid rafts. Palmitoylation is therefore required for envelope trafficking to classical lipid rafts, but not for viral replication.

It localises to the virion membrane. Its subcellular location is the host cell membrane. The protein localises to the host endosome membrane. Functionally, the surface protein gp120 (SU) attaches the virus to the host lymphoid cell by binding to the primary receptor CD4. This interaction induces a structural rearrangement creating a high affinity binding site for a chemokine coreceptor like CXCR4 and/or CCR5. This peculiar 2 stage receptor-interaction strategy allows gp120 to maintain the highly conserved coreceptor-binding site in a cryptic conformation, protected from neutralizing antibodies. Since CD4 also displays a binding site for the disulfide-isomerase P4HB/PDI, a P4HB/PDI-CD4-CXCR4-gp120 complex may form. In that complex, P4HB/PDI could reach and reduce gp120 disulfide bonds, causing major conformational changes in gp120. TXN, another PDI family member could also be involved in disulfide rearrangements in Env during fusion. These changes are transmitted to the transmembrane protein gp41 and are thought to activate its fusogenic potential by unmasking its fusion peptide. In terms of biological role, the surface protein gp120 is a ligand for CD209/DC-SIGN and CLEC4M/DC-SIGNR, which are respectively found on dendritic cells (DCs), and on endothelial cells of liver sinusoids and lymph node sinuses. These interactions allow capture of viral particles at mucosal surfaces by these cells and subsequent transmission to permissive cells. DCs are professional antigen presenting cells, critical for host immunity by inducing specific immune responses against a broad variety of pathogens. They act as sentinels in various tissues where they take up antigen, process it, and present it to T-cells following migration to lymphoid organs. HIV subverts the migration properties of dendritic cells to gain access to CD4+ T-cells in lymph nodes. Virus transmission to permissive T-cells occurs either in trans (without DCs infection, through viral capture and transmission), or in cis (following DCs productive infection, through the usual CD4-gp120 interaction), thereby inducing a robust infection. In trans infection, bound virions remain infectious over days and it is proposed that they are not degraded, but protected in non-lysosomal acidic organelles within the DCs close to the cell membrane thus contributing to the viral infectious potential during DCs' migration from the periphery to the lymphoid tissues. On arrival at lymphoid tissues, intact virions recycle back to DCs' cell surface allowing virus transmission to CD4+ T-cells. Virion capture also seems to lead to MHC-II-restricted viral antigen presentation, and probably to the activation of HIV-specific CD4+ cells. Its function is as follows. The transmembrane protein gp41 (TM) acts as a class I viral fusion protein. Under the current model, the protein has at least 3 conformational states: pre-fusion native state, pre-hairpin intermediate state, and post-fusion hairpin state. During fusion of viral and target intracellular membranes, the coiled coil regions (heptad repeats) assume a trimer-of-hairpins structure, positioning the fusion peptide in close proximity to the C-terminal region of the ectodomain. The formation of this structure appears to drive apposition and subsequent fusion of viral and target cell membranes. Complete fusion occurs in host cell endosomes and is dynamin-dependent, however some lipid transfer might occur at the plasma membrane. The virus undergoes clathrin-dependent internalization long before endosomal fusion, thus minimizing the surface exposure of conserved viral epitopes during fusion and reducing the efficacy of inhibitors targeting these epitopes. Membranes fusion leads to delivery of the nucleocapsid into the cytoplasm. The envelope glycoprotein gp160 precursor down-modulates cell surface CD4 antigen by interacting with it in the endoplasmic reticulum and blocking its transport to the cell surface. Functionally, the gp120-gp41 heterodimer seems to contribute to T-cell depletion during HIV-1 infection. The envelope glycoproteins expressed on the surface of infected cells induce apoptosis through an interaction with uninfected cells expressing the receptor (CD4) and the coreceptors CXCR4 or CCR5. This type of bystander killing may be obtained by at least three distinct mechanisms. First, the interaction between the 2 cells can induce cellular fusion followed by nuclear fusion within the syncytium. Syncytia are condemned to die from apoptosis. Second, the 2 interacting cells may not fuse entirely and simply exchange plasma membrane lipids, after a sort of hemifusion process, followed by rapid death. Third, it is possible that virus-infected cells, on the point of undergoing apoptosis, fuse with CD4-expressing cells, in which case apoptosis is rapidly transmitted from one cell to the other and thus occurs in a sort of contagious fashion. In terms of biological role, the gp120-gp41 heterodimer allows rapid transcytosis of the virus through CD4 negative cells such as simple epithelial monolayers of the intestinal, rectal and endocervical epithelial barriers. Both gp120 and gp41 specifically recognize glycosphingolipids galactosyl-ceramide (GalCer) or 3' sulfo-galactosyl-ceramide (GalS) present in the lipid rafts structures of epithelial cells. Binding to these alternative receptors allows the rapid transcytosis of the virus through the epithelial cells. This transcytotic vesicle-mediated transport of virions from the apical side to the basolateral side of the epithelial cells does not involve infection of the cells themselves. This Human immunodeficiency virus type 2 subtype A (isolate NIH-Z) (HIV-2) protein is Envelope glycoprotein gp160 (env).